A 237-amino-acid polypeptide reads, in one-letter code: Small ribosomal subunit protein eS4 (237 aa).

Residues 37–100 (IPLAVLLRDV…NEYYRIIPDP (64 aa)) enclose the S4 RNA-binding domain.

This sequence belongs to the eukaryotic ribosomal protein eS4 family.

This chain is Small ribosomal subunit protein eS4, found in Caldivirga maquilingensis (strain ATCC 700844 / DSM 13496 / JCM 10307 / IC-167).